The following is a 196-amino-acid chain: Imidazoleglycerol-phosphate dehydratase (196 aa).

The protein belongs to the imidazoleglycerol-phosphate dehydratase family.

It localises to the cytoplasm. It catalyses the reaction D-erythro-1-(imidazol-4-yl)glycerol 3-phosphate = 3-(imidazol-4-yl)-2-oxopropyl phosphate + H2O. It functions in the pathway amino-acid biosynthesis; L-histidine biosynthesis; L-histidine from 5-phospho-alpha-D-ribose 1-diphosphate: step 6/9. The chain is Imidazoleglycerol-phosphate dehydratase from Halobacterium salinarum (strain ATCC 700922 / JCM 11081 / NRC-1) (Halobacterium halobium).